The primary structure comprises 336 residues: Dihydroorotate dehydrogenase (quinone) (336 aa).

FMN contacts are provided by residues 62–66 and threonine 86; that span reads AGLDK. Residue lysine 66 participates in substrate binding. 111–115 serves as a coordination point for substrate; that stretch reads NRMGF. Residues asparagine 139 and asparagine 172 each coordinate FMN. Asparagine 172 contacts substrate. Serine 175 acts as the Nucleophile in catalysis. Asparagine 177 contributes to the substrate binding site. FMN contacts are provided by lysine 217 and threonine 245. 246-247 is a substrate binding site; sequence NT. Residues glycine 268, glycine 297, and 318 to 319 each bind FMN; that span reads YS.

Belongs to the dihydroorotate dehydrogenase family. Type 2 subfamily. As to quaternary structure, monomer. The cofactor is FMN.

The protein resides in the cell membrane. It catalyses the reaction (S)-dihydroorotate + a quinone = orotate + a quinol. The protein operates within pyrimidine metabolism; UMP biosynthesis via de novo pathway; orotate from (S)-dihydroorotate (quinone route): step 1/1. Catalyzes the conversion of dihydroorotate to orotate with quinone as electron acceptor. The protein is Dihydroorotate dehydrogenase (quinone) of Escherichia coli O17:K52:H18 (strain UMN026 / ExPEC).